Here is a 141-residue protein sequence, read N- to C-terminus: Hemoglobin subunit alpha (141 aa).

In terms of domain architecture, Globin spans 1–141; that stretch reads VLSAADKTNV…VSTVLTSKYR (141 aa). Phosphoserine is present on S3. K7 bears the N6-succinyllysine mark. T8 is subject to Phosphothreonine. K11 is modified (N6-succinyllysine). Residue K16 is modified to N6-acetyllysine; alternate. N6-succinyllysine; alternate is present on K16. Position 24 is a phosphotyrosine (Y24). S35 is subject to Phosphoserine. Position 40 is an N6-succinyllysine (K40). S49 bears the Phosphoserine mark. H58 contributes to the O2 binding site. A heme b-binding site is contributed by H87. S102 carries the post-translational modification Phosphoserine. T108 is subject to Phosphothreonine. Phosphoserine occurs at positions 124 and 131. A phosphothreonine mark is found at T134 and T137. Phosphoserine is present on S138.

This sequence belongs to the globin family. Heterotetramer of two alpha chains and two beta chains. As to expression, red blood cells.

Functionally, involved in oxygen transport from the lung to the various peripheral tissues. The polypeptide is Hemoglobin subunit alpha (Tamiasciurus hudsonicus (American red squirrel)).